The sequence spans 244 residues: Flavin-dependent thymidylate synthase (244 aa).

One can recognise a ThyX domain in the interval 2–207 (VRVTLVNYTR…ELRPIIKWAK (206 aa)). FAD-binding positions include serine 56, 80–82 (RHR), and glutamine 88. Residues 77–80 (QLVR), 88–92 (QQSQR), and arginine 146 contribute to the dUMP site. Positions 80–90 (RHRIASYTQQS) match the ThyX motif motif. Residues 162 to 164 (NLR) and histidine 168 each bind FAD. A dUMP-binding site is contributed by arginine 173. Arginine 173 serves as the catalytic Involved in ionization of N3 of dUMP, leading to its activation.

This sequence belongs to the thymidylate synthase ThyX family. In terms of assembly, homotetramer. FAD serves as cofactor.

The catalysed reaction is dUMP + (6R)-5,10-methylene-5,6,7,8-tetrahydrofolate + NADPH + H(+) = dTMP + (6S)-5,6,7,8-tetrahydrofolate + NADP(+). The protein operates within pyrimidine metabolism; dTTP biosynthesis. Its function is as follows. Catalyzes the reductive methylation of 2'-deoxyuridine-5'-monophosphate (dUMP) to 2'-deoxythymidine-5'-monophosphate (dTMP) while utilizing 5,10-methylenetetrahydrofolate (mTHF) as the methyl donor, and NADPH and FADH(2) as the reductant. The sequence is that of Flavin-dependent thymidylate synthase from Pyrococcus abyssi (strain GE5 / Orsay).